A 466-amino-acid polypeptide reads, in one-letter code: MLHKSVLGLVLAAGMGTRMRSNQSKALQMIGGKPMIAHLLASMQETNLLTHQAIVYGYRGEALQAALKADFPNVFWVKQEQQLGTGDAVKSATALIEQHDLTLIAFADIPLIRPHTLQQLLHSAAQHGFAILTAQMENPFGYGRIIHDETGGVCAIVEEKDANREQKNIREINVGVMAVKQEWLLTYLPRLENHNAQGEFYLSDLVELIARDGHFIESFCLESADEAMGANDRAQLAALEAVYRQRKVQELFAQGVTLIDPNRIDIHGTVIAGADVVIEPNVFLKGTVVIGDGVTIESGCCLKDCEIGRNTIIRSHSVIDTATIGAQADIGPFARIRPQTVIADGGKIGNFVEIKAAKIGQESKVNHLSYIGDAHIGAKVNVGAGTITCNYDGAAKHPTFIGDHVFIGSNTALVAPVTIKNGATIGAGSVITRDVAADTLALTRPKLTQIEHWRRPQKKKEHKNDA.

Residues 1–233 are pyrophosphorylase; the sequence is MLHKSVLGLV…ADEAMGANDR (233 aa). Residues 11 to 14, Lys25, Gln79, and 84 to 85 each bind UDP-N-acetyl-alpha-D-glucosamine; these read LAAG and GT. Asp108 is a binding site for Mg(2+). 4 residues coordinate UDP-N-acetyl-alpha-D-glucosamine: Gly143, Glu158, Asn173, and Asn231. Asn231 is a Mg(2+) binding site. The segment at 234–254 is linker; sequence AQLAALEAVYRQRKVQELFAQ. Residues 255-466 are N-acetyltransferase; the sequence is GVTLIDPNRI…QKKKEHKNDA (212 aa). The UDP-N-acetyl-alpha-D-glucosamine site is built by Arg337 and Lys355. Residue His367 is the Proton acceptor of the active site. The UDP-N-acetyl-alpha-D-glucosamine site is built by Tyr370 and Asn381. Acetyl-CoA contacts are provided by residues Ala384, 390 to 391, Ser409, Ala427, and Arg444; that span reads NY.

In the N-terminal section; belongs to the N-acetylglucosamine-1-phosphate uridyltransferase family. The protein in the C-terminal section; belongs to the transferase hexapeptide repeat family. As to quaternary structure, homotrimer. The cofactor is Mg(2+).

Its subcellular location is the cytoplasm. The catalysed reaction is alpha-D-glucosamine 1-phosphate + acetyl-CoA = N-acetyl-alpha-D-glucosamine 1-phosphate + CoA + H(+). It catalyses the reaction N-acetyl-alpha-D-glucosamine 1-phosphate + UTP + H(+) = UDP-N-acetyl-alpha-D-glucosamine + diphosphate. The protein operates within nucleotide-sugar biosynthesis; UDP-N-acetyl-alpha-D-glucosamine biosynthesis; N-acetyl-alpha-D-glucosamine 1-phosphate from alpha-D-glucosamine 6-phosphate (route II): step 2/2. It participates in nucleotide-sugar biosynthesis; UDP-N-acetyl-alpha-D-glucosamine biosynthesis; UDP-N-acetyl-alpha-D-glucosamine from N-acetyl-alpha-D-glucosamine 1-phosphate: step 1/1. Its pathway is bacterial outer membrane biogenesis; LPS lipid A biosynthesis. Functionally, catalyzes the last two sequential reactions in the de novo biosynthetic pathway for UDP-N-acetylglucosamine (UDP-GlcNAc). The C-terminal domain catalyzes the transfer of acetyl group from acetyl coenzyme A to glucosamine-1-phosphate (GlcN-1-P) to produce N-acetylglucosamine-1-phosphate (GlcNAc-1-P), which is converted into UDP-GlcNAc by the transfer of uridine 5-monophosphate (from uridine 5-triphosphate), a reaction catalyzed by the N-terminal domain. The protein is Bifunctional protein GlmU of Dichelobacter nodosus (strain VCS1703A).